The primary structure comprises 142 residues: Transcription antitermination protein NusB (142 aa).

It belongs to the NusB family.

Its function is as follows. Involved in transcription antitermination. Required for transcription of ribosomal RNA (rRNA) genes. Binds specifically to the boxA antiterminator sequence of the ribosomal RNA (rrn) operons. This chain is Transcription antitermination protein NusB, found in Streptococcus mutans serotype c (strain ATCC 700610 / UA159).